A 1163-amino-acid polypeptide reads, in one-letter code: Type IV pilus biogenesis factor PilY1 (1163 aa).

A signal peptide spans 1–30 (MKSALHQIGKTSLAAALSGAVLLSAQTTHA). A disordered region spans residues 329–352 (SVGNADSTSRSLPDGKSYSSQTPY). Positions 600, 602, 604, and 608 each coordinate Ca(2+). Residues 619–621 (RGD) form an integrin-binding motif RGD region. D851, N853, D855, V857, and D859 together coordinate Ca(2+). The disordered stretch occupies residues 1138 to 1163 (SGECLTVNPGPNTRGRQNWRPIEGKN).

The protein belongs to the PilY1 family. Interacts (via C-terminal 532-1163) with host integrins alpha-V/beta-3 (ITGAV/ITGB3) and alpha-V/beta-5 (ITGAV/ITGB5).

The protein resides in the fimbrium. It localises to the membrane. Its subcellular location is the cytoplasm. The protein localises to the cytosol. Its function is as follows. Involved in pilus assembly, twitching motility and adhesion to host cells. Primes type IV pili (T4P) assembly and is required for inclusion of minor pilins PilV, PilW and PilX to the surface pili. Stabilizes assembled pilus fibers likely by antagonizing retraction mediated by PilT. Calcium-binding and calcium release by PilY1 seem to be essential for twitching motility and for regulation of pilus retraction dynamics of PilT. Adhesin for human tissue specifically recognizing a host receptor localized or enriched on basolateral epithelial cell surfaces. Binds host integrins in an calcium-dependent manner in vitro and this interaction may be employed by the bacterium to mediate host epithelial cell binding in vivo. This chain is Type IV pilus biogenesis factor PilY1, found in Pseudomonas aeruginosa (strain PAK).